The sequence spans 272 residues: 3-methyl-2-oxobutanoate hydroxymethyltransferase (272 aa).

Asp-43 and Asp-82 together coordinate Mg(2+). 3-methyl-2-oxobutanoate contacts are provided by residues 43–44 (DS), Asp-82, and Lys-112. Glu-114 contacts Mg(2+). The active-site Proton acceptor is Glu-179.

The protein belongs to the PanB family. Homodecamer; pentamer of dimers. Mg(2+) serves as cofactor.

The protein localises to the cytoplasm. It carries out the reaction 3-methyl-2-oxobutanoate + (6R)-5,10-methylene-5,6,7,8-tetrahydrofolate + H2O = 2-dehydropantoate + (6S)-5,6,7,8-tetrahydrofolate. It functions in the pathway cofactor biosynthesis; (R)-pantothenate biosynthesis; (R)-pantoate from 3-methyl-2-oxobutanoate: step 1/2. Catalyzes the reversible reaction in which hydroxymethyl group from 5,10-methylenetetrahydrofolate is transferred onto alpha-ketoisovalerate to form ketopantoate. This Staphylococcus aureus (strain Mu3 / ATCC 700698) protein is 3-methyl-2-oxobutanoate hydroxymethyltransferase.